The primary structure comprises 320 residues: Transcription factor MYB80 (320 aa).

HTH myb-type domains follow at residues 9-65 (KENV…RPDL) and 66-116 (KHGQ…KKKL). DNA-binding regions (H-T-H motif) lie at residues 37–61 (WRLI…TNYL) and 89–112 (WSLI…NTKL). The interval 257–283 (TAAAEEEERRKLKGEVVDQEEIGSEGG) is disordered. Positions 263–272 (EERRKLKGEV) are enriched in basic and acidic residues.

As to expression, expressed in the tapetum and middle layer of developing anthers. Expressed in trichomes.

It is found in the nucleus. In terms of biological role, transcription factor that binds to the DNA sequence 5'-CCAACC-3'. Regulates directly PME5, UND and GLOX1. Essential for tapetum development in anthers and microsporogenesis. Regulates the timing of tapetal programmed cell death (PCD) which is critical for pollen development. May act through the activation of UND, encoding an A1 aspartic protease. Required for anther development by regulating tapetum development, callose dissolution and exine formation. Acts upstream of A6 and FAR2/MS2, two genes required for pollen exine formation. Negatively regulates trichome endoreduplication and trichome branching. This Arabidopsis thaliana (Mouse-ear cress) protein is Transcription factor MYB80.